A 151-amino-acid polypeptide reads, in one-letter code: Small ribosomal subunit protein uS15 (151 aa).

Belongs to the universal ribosomal protein uS15 family.

The polypeptide is Small ribosomal subunit protein uS15 (RpS13) (Plutella xylostella (Diamondback moth)).